A 224-amino-acid chain; its full sequence is Protein FAM3D (224 aa).

The signal sequence occupies residues 1 to 25 (MRVSGVLRLLALIFAIVTTWMFIRS). Disulfide bonds link C55–C83 and C61–C218. In terms of domain architecture, GG-type lectin spans 64 to 222 (NYFAFKICSG…LEMEGCMPPK (159 aa)). Residue N107 is glycosylated (N-linked (GlcNAc...) asparagine).

This sequence belongs to the FAM3 family. As to expression, abundantly expressed in placenta and weakly expressed in small intestine.

The protein localises to the secreted. This is Protein FAM3D (FAM3D) from Homo sapiens (Human).